A 231-amino-acid chain; its full sequence is Acyl-protein thioesterase 2 (231 aa).

The S-palmitoyl cysteine moiety is linked to residue Cys-2. Ser-82 is subject to Phosphoserine. Catalysis depends on charge relay system residues Ser-122, Asp-176, and His-210.

It belongs to the AB hydrolase superfamily. AB hydrolase 2 family.

Its subcellular location is the cytoplasm. The enzyme catalyses S-hexadecanoyl-L-cysteinyl-[protein] + H2O = L-cysteinyl-[protein] + hexadecanoate + H(+). The catalysed reaction is prostaglandin E2 1-glyceryl ester + H2O = prostaglandin E2 + glycerol + H(+). It catalyses the reaction 1-hexadecanoyl-sn-glycero-3-phosphocholine + H2O = sn-glycerol 3-phosphocholine + hexadecanoate + H(+). It carries out the reaction 1-octadecanoyl-sn-glycero-3-phosphocholine + H2O = octadecanoate + sn-glycerol 3-phosphocholine + H(+). The enzyme catalyses 1-hexadecanoyl-sn-glycero-3-phosphate + H2O = sn-glycerol 3-phosphate + hexadecanoate + H(+). The catalysed reaction is 1-hexadecanoyl-sn-glycero-3-phospho-L-serine + H2O = sn-glycero-3-phospho-L-serine + hexadecanoate + H(+). Acts as an acyl-protein thioesterase hydrolyzing fatty acids from S-acylated cysteine residues in proteins such as trimeric G alpha proteins, GSDMD, GAP43, ZDHHC6 or HRAS. Deacylates GAP43. Mediates depalmitoylation of ZDHHC6. Has lysophospholipase activity. Hydrolyzes prostaglandin glycerol esters (PG-Gs) in the following order prostaglandin D2-glycerol ester (PGD2-G) &gt; prostaglandin E2 glycerol ester (PGE2-G) &gt; prostaglandin F2-alpha-glycerol ester (PGF2-alpha-G). Hydrolyzes 1-arachidonoylglycerol but not 2-arachidonoylglycerol or arachidonoylethanolamide. This Rattus norvegicus (Rat) protein is Acyl-protein thioesterase 2 (Lypla2).